A 138-amino-acid chain; its full sequence is Putative pre-16S rRNA nuclease (138 aa).

Belongs to the YqgF nuclease family.

It localises to the cytoplasm. In terms of biological role, could be a nuclease involved in processing of the 5'-end of pre-16S rRNA. The sequence is that of Putative pre-16S rRNA nuclease from Flavobacterium johnsoniae (strain ATCC 17061 / DSM 2064 / JCM 8514 / BCRC 14874 / CCUG 350202 / NBRC 14942 / NCIMB 11054 / UW101) (Cytophaga johnsonae).